We begin with the raw amino-acid sequence, 318 residues long: Probable dual-specificity RNA methyltransferase RlmN (318 aa).

The active-site Proton acceptor is the Glu63. Positions 69–299 constitute a Radical SAM core domain; the sequence is HDYGRTVCVS…VSLRRELGAD (231 aa). A disulfide bridge connects residues Cys76 and Cys304. The [4Fe-4S] cluster site is built by Cys83, Cys87, and Cys90. S-adenosyl-L-methionine is bound by residues 130-131, Ser162, 185-187, and Asn261; these read GE and SLH. Catalysis depends on Cys304, which acts as the S-methylcysteine intermediate.

Belongs to the radical SAM superfamily. RlmN family. [4Fe-4S] cluster serves as cofactor.

It is found in the cytoplasm. It catalyses the reaction adenosine(2503) in 23S rRNA + 2 reduced [2Fe-2S]-[ferredoxin] + 2 S-adenosyl-L-methionine = 2-methyladenosine(2503) in 23S rRNA + 5'-deoxyadenosine + L-methionine + 2 oxidized [2Fe-2S]-[ferredoxin] + S-adenosyl-L-homocysteine. The catalysed reaction is adenosine(37) in tRNA + 2 reduced [2Fe-2S]-[ferredoxin] + 2 S-adenosyl-L-methionine = 2-methyladenosine(37) in tRNA + 5'-deoxyadenosine + L-methionine + 2 oxidized [2Fe-2S]-[ferredoxin] + S-adenosyl-L-homocysteine. Functionally, specifically methylates position 2 of adenine 2503 in 23S rRNA and position 2 of adenine 37 in tRNAs. The sequence is that of Probable dual-specificity RNA methyltransferase RlmN from Desulforudis audaxviator (strain MP104C).